Reading from the N-terminus, the 359-residue chain is 4-galactosyl-N-acetylglucosaminide 3-alpha-L-fucosyltransferase 9 (359 aa).

Over 1 to 11 (MTSTSKGILRP) the chain is Cytoplasmic. A helical; Signal-anchor for type II membrane protein transmembrane segment spans residues 12–32 (FLIVCIILGCFMACLLIYIKP). At 33 to 359 (TNSWVFSPME…VGNLEKWFWN (327 aa)) the chain is on the lumenal side. An N-linked (GlcNAc...) asparagine glycan is attached at N62. Residues 63–168 (ETTILVWVWP…RRDSDIQVPY (106 aa)) form an acceptor-binding region. Q75 contacts a beta-D-galactosyl-(1-&gt;4)-N-acetyl-beta-D-glucosaminyl derivative. Intrachain disulfides connect C82-C335, C91-C338, and C190-C238. Residue N101 is glycosylated (N-linked (GlcNAc...) asparagine). Residue E137 coordinates a beta-D-galactosyl-(1-&gt;4)-N-acetyl-beta-D-glucosaminyl derivative. Residue E137 is the Nucleophile of the active site. Position 137 (E137) interacts with GDP-beta-L-fucose. N-linked (GlcNAc...) asparagine glycosylation is present at N153. The GDP-beta-L-fucose site is built by Y168, V192, S194, N195, R202, V226, Y241, N246, Y252, E255, and K256. The tract at residues 169–326 (GFLTVSTNPF…NWRKDFTVNL (158 aa)) is donor-binding. Residues 327–359 (PRFWESHACLACDHVKRHQEYKSVGNLEKWFWN) are acceptor-binding.

It belongs to the glycosyltransferase 10 family. Homodimer. N-glycosylated with complex-type N-glycans. As to expression, mainly detected in brain and kidney.

It localises to the golgi apparatus. The protein resides in the trans-Golgi network membrane. The protein localises to the golgi apparatus membrane. The catalysed reaction is a beta-D-galactosyl-(1-&gt;4)-N-acetyl-beta-D-glucosaminyl derivative + GDP-beta-L-fucose = a beta-D-galactosyl-(1-&gt;4)-[alpha-L-fucosyl-(1-&gt;3)]-N-acetyl-beta-D-glucosaminyl derivative + GDP + H(+). It catalyses the reaction an alpha-Neu5Ac-(2-&gt;3)-beta-D-Gal-(1-&gt;4)-beta-D-GlcNAc-(1-&gt;3)-beta-D-Gal-(1-&gt;4)-beta-D-GlcNAc derivative + GDP-beta-L-fucose = an alpha-Neu5Ac-(2-&gt;3)-beta-D-Gal-(1-&gt;4)-beta-D-GlcNAc-(1-&gt;3)-beta-D-Gal-(1-&gt;4)-[alpha-L-Fuc-(1-&gt;3)]-beta-D-GlcNAc derivative + GDP + H(+). It carries out the reaction alpha-N-glycoloylneuraminosyl-(2-&gt;3)-beta-D-galactosyl-(1-&gt;4)-N-acetyl-beta-D-glucosaminyl-(1-&gt;3)-beta-D-galactosyl-(1-&gt;4)-N-acetyl-beta-D-glucosaminyl-(1-&gt;3)-beta-D-galactosyl-(1-&gt;4)-beta-D-glucosyl-(1&lt;-&gt;1')-ceramide + GDP-beta-L-fucose = alpha-N-glycoloylneuraminosyl-(2-&gt;3)-beta-D-galactosyl-(1-&gt;4)-N-acetyl-beta-D-glucosaminyl-(1-&gt;3)-beta-D-galactosyl-(1-&gt;4)-[alpha-L-fucosyl-(1-&gt;3)]-N-acetyl-beta-D-glucosaminyl-(1-&gt;3)-beta-D-galactosyl-(1-&gt;4)-beta-D-glucosyl-(1&lt;-&gt;1')-ceramide + GDP + H(+). The enzyme catalyses alpha-D-galactosyl-(1-&gt;3)-beta-D-galactosyl-(1-&gt;4)-N-acetyl-beta-D-glucosaminyl-(1-&gt;3)-beta-D-galactosyl-(1-&gt;4)-beta-D-glucosyl-(1&lt;-&gt;1')-ceramide + GDP-beta-L-fucose = a neolactoside IV(3)-alpha-Gal,III(3)-alpha-Fuc-nLc4Cer + GDP + H(+). The catalysed reaction is a neolactoside nLc4Cer + GDP-beta-L-fucose = a neolactoside III(3)-alpha-Fuc-nLc4Cer + GDP + H(+). It catalyses the reaction an N-acetyl-alpha-neuraminyl-(2-&gt;3)-beta-D-galactosyl-(1-&gt;4)-N-acetyl-beta-D-glucosaminyl derivative + GDP-beta-L-fucose = an alpha-Neu5Ac-(2-&gt;3)-beta-D-Gal-(1-&gt;4)-[alpha-L-Fuc-(1-&gt;3)]-beta-D-GlcNAc derivative + GDP + H(+). It carries out the reaction beta-D-Gal-(1-&gt;4)-beta-D-GlcNAc-(1-&gt;3)-beta-D-Gal-(1-&gt;4)-D-Glc + GDP-beta-L-fucose = beta-D-Gal-(1-&gt;4)-[alpha-L-Fuc-(1-&gt;3)]-beta-D-GlcNAc-(1-&gt;3)-beta-D-Gal-(1-&gt;4)-D-Glc + GDP + H(+). The enzyme catalyses an alpha-L-Fuc-(1-&gt;2)-beta-D-Gal-(1-&gt;4)-beta-D-GlcNAc derivative + GDP-beta-L-fucose = an alpha-L-Fuc-(1-&gt;2)-beta-D-Gal-(1-&gt;4)-[alpha-L-Fuc-(1-&gt;3)]-beta-D-GlcNAc derivative + GDP + H(+). Its pathway is protein modification; protein glycosylation. The protein operates within glycolipid biosynthesis. Its activity is regulated as follows. Activated by Mn2+. Catalyzes alpha(1-&gt;3) linkage of fucosyl moiety transferred from GDP-beta-L-fucose to N-acetyl glucosamine (GlcNAc) within type 2 lactosamine (LacNAc, beta-D-Gal-(1-&gt;4)-beta-D-GlcNAc-) glycan attached to glycolipids and N- or O-linked glycoproteins. Fucosylates distal type 2 LacNAc and its fucosylated (H-type 2 LacNAc) and sialylated (sialyl-type 2 LacNAc) derivatives to form Lewis x (Lex) (CD15) and Lewis y (Ley) antigenic epitopes involved in cell adhesion and differentiation. Generates Lex epitopes in the brain, presumably playing a role in the maintenance of neuronal stemness and neurite outgrowth in progenitor neural cells. Fucosylates the internal type 2 LacNAc unit of the polylactosamine chain to form VIM-2 antigen that serves as recognition epitope for SELE. Can also modify milk oligosaccharides in particular type 2 tetrasaccharide LNnT. In Mus musculus (Mouse), this protein is 4-galactosyl-N-acetylglucosaminide 3-alpha-L-fucosyltransferase 9.